Consider the following 599-residue polypeptide: MKHADPLRADTLGTAPLSQAIEAHHHGKEREAHRQSLSSVPGDTVVEAPEKVVDLEINSVDNDKEHHRAPTRDEIQTLRKVPGSIPATAYLLCFVDFAERASWFGARSVSSNFMQFPLPEGGNGAGAPPSGSELPAGALGHGQRFSVALGLVFSFLSYVIPIFGAWLAEAKVGRYRTILIGVLIGGVAHIIMIAGAVPSILQAGKGTAPFLVSLFLLALGAGLFRPNVSPTVLDQHRHYQPFVKELPSGENVIIDPEATMQRIMLIFYALINVGAFYSLATVYSEKLVGYWLAFLLPGIIYLLLPLMLWYLNDKLIKVPPDGGALTKFWKILTVSLVENKGMVWKKGFFDRVQPGALLQKYPSSGPVKWTSKDVEDVKRTLVACEIFLYFPIYHLNDGGVGTILPSQGAAMLKKGVPNDLLGNFNPITIMITVPVLTYIVYPALRKSNIKFGRISRITLGFWLAVISGLVSSLVQWRIYKTSPCGYHATTCPEVAPVSIWWQLPSYVLGALSECFSNVTGYELAYARSPPGMRSLVVSLFLFSTALSSALGLILTPAIVDPHLVWVWAGPTIALAVQTVIFWVRHRKYNDDEFMIEGDE.

Residues 23–34 (AHHHGKEREAHR) are compositionally biased toward basic and acidic residues. The interval 23-42 (AHHHGKEREAHRQSLSSVPG) is disordered. The next 8 membrane-spanning stretches (helical) occupy residues 147–167 (VALG…GAWL), 178–198 (ILIG…GAVP), 204–224 (GKGT…AGLF), 263–283 (IMLI…ATVY), 291–311 (WLAF…LWYL), 386–406 (IFLY…ILPS), 424–444 (FNPI…YPAL), and 454–474 (ISRI…SSLV). Asparagine 517 carries an N-linked (GlcNAc...) asparagine glycan. A run of 2 helical transmembrane segments spans residues 539–559 (LFLF…PAIV) and 563–583 (LVWV…IFWV).

The protein belongs to the major facilitator superfamily. Proton-dependent oligopeptide transporter (POT/PTR) (TC 2.A.17) family.

It is found in the membrane. In terms of biological role, MFS-type transporter; part of the gene cluster that mediates the biosynthesis of UCS1025A, a member of the pyrrolizidinone family that acts as a strong telomerase inhibitor and displays potent antibacterial and antitumor properties. These compounds share a hemiaminal-containing pyrrolizidinone core fused with a gamma-lactone, giving a furopyrrolizidine that is connected to a decalin fragment. The chain is MFS-type transporter ucsM from Acremonium sp.